We begin with the raw amino-acid sequence, 216 residues long: Ethylene-responsive transcription factor ERF016 (216 aa).

A DNA-binding region (AP2/ERF) is located at residues 6-63 (KYTGVRKRKWGKWVAEIRLPNSRDRIWLGSFDSAEKAARAFDAALYCLRGPGARFNFP). The disordered stretch occupies residues 121 to 145 (EINSGSGGPTLGQVGEDNNNEGNSN). Low complexity predominate over residues 135 to 145 (GEDNNNEGNSN).

The protein belongs to the AP2/ERF transcription factor family. ERF subfamily.

The protein localises to the nucleus. Probably acts as a transcriptional activator. Binds to the GCC-box pathogenesis-related promoter element. May be involved in the regulation of gene expression by stress factors and by components of stress signal transduction pathways. In Arabidopsis thaliana (Mouse-ear cress), this protein is Ethylene-responsive transcription factor ERF016 (ERF016).